The sequence spans 138 residues: Large ribosomal subunit protein eL32 (138 aa).

Belongs to the eukaryotic ribosomal protein eL32 family.

In Saccharolobus solfataricus (strain ATCC 35092 / DSM 1617 / JCM 11322 / P2) (Sulfolobus solfataricus), this protein is Large ribosomal subunit protein eL32 (rpl32e).